Reading from the N-terminus, the 185-residue chain is Translation initiation factor IF-3 (185 aa).

It belongs to the IF-3 family. Monomer.

It is found in the cytoplasm. IF-3 binds to the 30S ribosomal subunit and shifts the equilibrium between 70S ribosomes and their 50S and 30S subunits in favor of the free subunits, thus enhancing the availability of 30S subunits on which protein synthesis initiation begins. This is Translation initiation factor IF-3 from Rickettsia prowazekii (strain Madrid E).